The chain runs to 479 residues: tRNA-dihydrouridine(20) synthase [NAD(P)+] (479 aa).

Residues 14 to 16 (PMV) and glutamine 87 each bind FMN. Catalysis depends on cysteine 116, which acts as the Proton donor. FMN-binding positions include lysine 159, histidine 187, 221-223 (NGD), and 245-246 (AR).

It belongs to the Dus family. Dus2 subfamily. The cofactor is FMN.

The protein localises to the cytoplasm. It localises to the nucleus. It catalyses the reaction 5,6-dihydrouridine(20) in tRNA + NADP(+) = uridine(20) in tRNA + NADPH + H(+). It carries out the reaction 5,6-dihydrouridine(20) in tRNA + NAD(+) = uridine(20) in tRNA + NADH + H(+). The catalysed reaction is a 5,6-dihydrouridine in mRNA + NAD(+) = a uridine in mRNA + NADH + H(+). The enzyme catalyses a 5,6-dihydrouridine in mRNA + NADP(+) = a uridine in mRNA + NADPH + H(+). Its function is as follows. Catalyzes the NADPH-dependent synthesis of dihydrouridine, a modified base found in the D-loop of most tRNAs. Specifically modifies U20 in cytoplasmic tRNAs. Also able to mediate dihydrouridylation of some mRNAs, thereby affecting their translation. The chain is tRNA-dihydrouridine(20) synthase [NAD(P)+] from Schizosaccharomyces pombe (strain 972 / ATCC 24843) (Fission yeast).